We begin with the raw amino-acid sequence, 170 residues long: 4-hydroxyphenylacetate 3-monooxygenase reductase component (170 aa).

This sequence belongs to the non-flavoprotein flavin reductase family. HpaC subfamily. Homodimer. 4-HPA 3-monooxygenase consists of a reductase component HpaC and an oxygenase component HpaB.

The enzyme catalyses a reduced flavin + NAD(+) = an oxidized flavin + NADH + 2 H(+). It functions in the pathway aromatic compound metabolism; 4-hydroxyphenylacetate degradation; pyruvate and succinate semialdehyde from 4-hydroxyphenylacetate: step 1/7. Catalyzes the reduction of free flavins (FMN, FAD and riboflavin) by NADH. Subsequently, the reduced flavins diffuse to the large HpaB component or to other electron acceptors such as cytochrome c and Fe(3+) ion. The protein is 4-hydroxyphenylacetate 3-monooxygenase reductase component (hpaC) of Salmonella typhimurium (strain LT2 / SGSC1412 / ATCC 700720).